The following is a 445-amino-acid chain: DNA polymerase IV (445 aa).

In terms of domain architecture, UmuC spans Leu49–Gly229. Asp53 and Asp146 together coordinate Mg(2+). Residue Glu147 is part of the active site.

It belongs to the DNA polymerase type-Y family. In terms of assembly, monomer. Mg(2+) is required as a cofactor.

Its subcellular location is the cytoplasm. It catalyses the reaction DNA(n) + a 2'-deoxyribonucleoside 5'-triphosphate = DNA(n+1) + diphosphate. Functionally, poorly processive, error-prone DNA polymerase involved in untargeted mutagenesis. Copies undamaged DNA at stalled replication forks, which arise in vivo from mismatched or misaligned primer ends. These misaligned primers can be extended by PolIV. Exhibits no 3'-5' exonuclease (proofreading) activity. May be involved in translesional synthesis, in conjunction with the beta clamp from PolIII. In Brucella melitensis biotype 1 (strain ATCC 23456 / CCUG 17765 / NCTC 10094 / 16M), this protein is DNA polymerase IV.